Consider the following 52-residue polypeptide: Light-harvesting protein B-870 alpha chain (52 aa).

Over 1–15 (MAKFYKIWLIFDPRR) the chain is Cytoplasmic. The chain crosses the membrane as a helical span at residues 16–36 (VFVAQGVFLFLLAAMIHLVVL). H32 contributes to the a bacteriochlorophyll binding site. Over 37–52 (SSGLNWFEAAAAVGGQ) the chain is Periplasmic.

The protein belongs to the antenna complex alpha subunit family. The core complex is formed by different alpha and beta chains, binding bacteriochlorophyll molecules, and arranged most probably in tetrameric structures disposed around the reaction center. The non-pigmented gamma chains may constitute additional components.

It localises to the cell inner membrane. Its function is as follows. Antenna complexes are light-harvesting systems, which transfer the excitation energy to the reaction centers. This Roseobacter denitrificans (strain ATCC 33942 / OCh 114) (Erythrobacter sp. (strain OCh 114)) protein is Light-harvesting protein B-870 alpha chain (pufA).